Consider the following 142-residue polypeptide: Large ribosomal subunit protein uL11 (142 aa).

Belongs to the universal ribosomal protein uL11 family. In terms of assembly, part of the ribosomal stalk of the 50S ribosomal subunit. Interacts with L10 and the large rRNA to form the base of the stalk. L10 forms an elongated spine to which L12 dimers bind in a sequential fashion forming a multimeric L10(L12)X complex. In terms of processing, one or more lysine residues are methylated.

In terms of biological role, forms part of the ribosomal stalk which helps the ribosome interact with GTP-bound translation factors. This is Large ribosomal subunit protein uL11 from Haemophilus influenzae (strain PittGG).